A 151-amino-acid polypeptide reads, in one-letter code: Transcriptional repressor NrdR (151 aa).

Residues 3–34 (CPYCGYEETRVLDSRVDSSGMTVRRRRECVKC) fold into a zinc finger. The ATP-cone domain occupies 49-139 (VFVVKKDGKR…VYKDFREIDQ (91 aa)).

Belongs to the NrdR family. Requires Zn(2+) as cofactor.

Functionally, negatively regulates transcription of bacterial ribonucleotide reductase nrd genes and operons by binding to NrdR-boxes. In Thermosipho melanesiensis (strain DSM 12029 / CIP 104789 / BI429), this protein is Transcriptional repressor NrdR.